The chain runs to 193 residues: Ubiquitin-conjugating enzyme E2 E1 (193 aa).

Residues 1 to 45 are disordered; it reads MSDDDSRASTSSSSSSSSNQQTEKEGSTPKKKESKVSMSKNSKLL. Serine 2 bears the N-acetylserine mark. The segment covering 8 to 18 has biased composition (low complexity); that stretch reads ASTSSSSSSSS. Residues 22–35 are compositionally biased toward basic and acidic residues; the sequence is TEKEGSTPKKKESK. Positions 36-45 are enriched in polar residues; sequence VSMSKNSKLL. Residues 47 to 193 enclose the UBC core domain; the sequence is TSAKRIQKEL…ARQWTKRYAT (147 aa). Cysteine 131 acts as the Glycyl thioester intermediate in catalysis. A Glycyl lysine isopeptide (Lys-Gly) (interchain with G-Cter in ISG15) cross-link involves residue lysine 136.

Belongs to the ubiquitin-conjugating enzyme family. Interacts with RNF14. Post-translationally, ISGylation suppresses ubiquitin E2 enzyme activity. Autoubiquitinated.

The protein localises to the nucleus. The enzyme catalyses S-ubiquitinyl-[E1 ubiquitin-activating enzyme]-L-cysteine + [E2 ubiquitin-conjugating enzyme]-L-cysteine = [E1 ubiquitin-activating enzyme]-L-cysteine + S-ubiquitinyl-[E2 ubiquitin-conjugating enzyme]-L-cysteine.. The catalysed reaction is S-ubiquitinyl-[E1 ubiquitin-activating enzyme]-L-cysteine + [acceptor protein]-L-lysine = [E1 ubiquitin-activating enzyme]-L-cysteine + N(6)-monoubiquitinyl-[acceptor protein]-L-lysine.. The protein operates within protein modification; protein ubiquitination. In terms of biological role, accepts ubiquitin from the E1 complex and catalyzes its covalent attachment to other proteins. Catalyzes the covalent attachment of ISG15 to other proteins. Mediates the selective degradation of short-lived and abnormal proteins. In vitro also catalyzes 'Lys-48'-linked polyubiquitination. The sequence is that of Ubiquitin-conjugating enzyme E2 E1 (Ube2e1) from Mus musculus (Mouse).